The chain runs to 189 residues: Hypoxanthine/guanine phosphoribosyltransferase (189 aa).

Belongs to the purine/pyrimidine phosphoribosyltransferase family. Archaeal HPRT subfamily. Homodimer.

Its subcellular location is the cytoplasm. It carries out the reaction IMP + diphosphate = hypoxanthine + 5-phospho-alpha-D-ribose 1-diphosphate. The enzyme catalyses GMP + diphosphate = guanine + 5-phospho-alpha-D-ribose 1-diphosphate. Its pathway is purine metabolism; IMP biosynthesis via salvage pathway; IMP from hypoxanthine: step 1/1. Catalyzes a salvage reaction resulting in the formation of IMP that is energically less costly than de novo synthesis. The protein is Hypoxanthine/guanine phosphoribosyltransferase (hpt) of Methanosarcina acetivorans (strain ATCC 35395 / DSM 2834 / JCM 12185 / C2A).